The chain runs to 1940 residues: Myosin-2 (1940 aa).

Residues 33–82 (DAKTSVFVAEPKESFVKGTVQSREGGKVTVKTEAGATLTVKEDQVFPMNP) enclose the Myosin N-terminal SH3-like domain. A phosphothreonine mark is found at threonine 64 and threonine 69. Residues 86 to 783 (DKIEDMAMMT…LLGLLEEMRD (698 aa)) enclose the Myosin motor domain. Lysine 130 is subject to N6,N6,N6-trimethyllysine. 179–186 (GESGAGKT) lines the ATP pocket. Tyrosine 389 is subject to Phosphotyrosine. The residue at position 392 (serine 392) is a Phosphoserine. Threonine 419 carries the phosphothreonine modification. A Phosphoserine modification is found at serine 625. The actin-binding stretch occupies residues 660-682 (LNKLMTNLRSTHPHFVRCIIPNE). Histidine 758 is subject to Pros-methylhistidine. The segment at 762-776 (KFGHTKVFFKAGLLG) is actin-binding. An IQ domain is found at 786–815 (LAQLITRTQARCRGFLARVEYQKMVERRES). Residues 844 to 1940 (LLKSAETEKE…EVHTKVISEE (1097 aa)) adopt a coiled-coil conformation. Serine 1093, serine 1097, serine 1163, and serine 1238 each carry phosphoserine. The tract at residues 1154–1173 (RLEEAGGATSAQIEMNKKRE) is disordered. A Phosphothreonine modification is found at threonine 1242. Position 1244 is a phosphoserine (serine 1244). Position 1256 is a phosphothreonine (threonine 1256). Residue serine 1262 is modified to Phosphoserine. Phosphothreonine is present on threonine 1287. Residues serine 1289, serine 1293, serine 1304, and serine 1307 each carry the phosphoserine modification. The residue at position 1465 (tyrosine 1465) is a Phosphotyrosine. Threonine 1468 is modified (phosphothreonine). Serine 1475 bears the Phosphoserine mark. Phosphotyrosine is present on tyrosine 1493. Serine 1496 carries the post-translational modification Phosphoserine. Threonine 1502 bears the Phosphothreonine mark. Serine 1515 bears the Phosphoserine mark. At threonine 1518 the chain carries Phosphothreonine. Serine 1543, serine 1555, serine 1575, serine 1601, serine 1715, and serine 1727 each carry phosphoserine. A phosphothreonine mark is found at threonine 1731 and threonine 1737. A Phosphoserine modification is found at serine 1740. The disordered stretch occupies residues 1884-1920 (KRQAEEAEEQSNTNLSKFRKLQHELEEAEERADIAES).

This sequence belongs to the TRAFAC class myosin-kinesin ATPase superfamily. Myosin family. Muscle myosin is a hexameric protein that consists of 2 heavy chain subunits (MHC), 2 alkali light chain subunits (MLC) and 2 regulatory light chain subunits (MLC-2). Interacts with GCSAM.

The protein localises to the cytoplasm. It localises to the myofibril. Functionally, myosins are actin-based motor molecules with ATPase activity essential for muscle contraction. The polypeptide is Myosin-2 (MYH2) (Canis lupus familiaris (Dog)).